Consider the following 456-residue polypeptide: Gamma-glutamyl phosphate reductase (456 aa).

The protein belongs to the gamma-glutamyl phosphate reductase family.

Its subcellular location is the cytoplasm. The enzyme catalyses L-glutamate 5-semialdehyde + phosphate + NADP(+) = L-glutamyl 5-phosphate + NADPH + H(+). It participates in amino-acid biosynthesis; L-proline biosynthesis; L-glutamate 5-semialdehyde from L-glutamate: step 2/2. Catalyzes the NADPH-dependent reduction of L-glutamate 5-phosphate into L-glutamate 5-semialdehyde and phosphate. The product spontaneously undergoes cyclization to form 1-pyrroline-5-carboxylate. This Haloquadratum walsbyi (strain DSM 16790 / HBSQ001) protein is Gamma-glutamyl phosphate reductase.